Consider the following 357-residue polypeptide: Protein FAM118A (357 aa).

Met-1 bears the N-acetylmethionine mark. Residues 30–46 traverse the membrane as a helical segment; the sequence is LLLVIGTGVSAAVAPGI. Phosphoserine is present on Ser-311.

It belongs to the FAM118 family.

The protein localises to the membrane. The sequence is that of Protein FAM118A (Fam118a) from Mus musculus (Mouse).